Consider the following 1087-residue polypeptide: MADHVQSLAQLENLCKQLYETTDTTTRLQAEKALVEFTNSPDCLSKCQLLLERGSSSYSQLLAATCLTKLVSRTNNPLPLEQRIDIRNYVLNYLATRPKLATFVTQALIQLYARITKLGWFDCQKDDYVFRNAITDVTRFLQDSVEYCIIGVTILSQLTNEINQADTTHPLTKHRKIASSFRDSSLFDIFTLSCNLLKQASGKNLNLNDESQHGLLMQLLKLTHNCLNFDFIGTSTDESSDDLCTVQIPTSWRSAFLDSSTLQLFFDLYHSIPPSFSPLVLSCLVQIASVRRSLFNNAERAKFLSHLVDGVKRILENPQSLSDPNNYHEFCRLLARLKSNYQLGELVKVENYPDVIRLIANFTVTSLQHWEFAPNSVHYLLSLWQRLAASVPYVKATEPHMLETYTPEVTKAYITSRLESVHIILRDGLEDPLEDTGLVQQQLDQLSTIGRCEYEKTCALLVQLFDQSAQSYQELLQSASASPMDIAVQEGRLTWLVYIIGAVIGGRVSFASTDEQDAMDGELVCRVLQLMNLTDSRLAQAGNEKLELAMLSFFEQFRKIYIGDQVQKSSKLYRRLSEVLGLNDETMVLSVFIGKVITNLKYWGRCEPITSKTLQLLNDLSIGYSSVRKLVKLSAVQFMLNNHTSEHFSFLGINNQSNLTDMRCRTTFYTALGRLLMVDLGEDEDQYEQFMLPLTAAFEAVAQMFSTNSFNEQEAKRTLVGLVRDLRGIAFAFNAKTSFMMLFEWIYPSYMPILQRAIELWYHDPACTTPVLKLMAELVHNRSQRLQFDVSSPNGILLFRETSKMITMYGNRILTLGEVPKDQVYALKLKGISICFSMLKAALSGSYVNFGVFRLYGDDALENALQTFIKLLLSIPHSDLLDYPKLSQSYYSLLEVLTQDHMNFIASLEPHVIMYILSSISEGLTALDTMVCTGCCSCLDHIVTYLFKQLSRSTKKRTTPLNRESDCFLHIMQQHPAMIQQMLSTVLNIIIFEDCRNQWSMSRPLLGLILLNEKYFSDLRNSIVNSQPPEKQQAMHLCFENLMEGIERNLLTKNRDRFTQNLSAFRREVNDSMKNSTYGVNSNDMMS.

A2 carries the post-translational modification N-acetylalanine. One can recognise an Importin N-terminal domain in the interval 30-96 (AEKALVEFTN…RNYVLNYLAT (67 aa)). Residue S570 is modified to Phosphoserine.

The protein belongs to the exportin family. As to quaternary structure, binds to nucleoporins. Found in a complex with XPO7, EIF4A1, ARHGAP1, VPS26A, VPS29, VPS35 and SFN. Interacts with ARHGAP1 and SFN. Interacts with Ran and cargo proteins in a GTP-dependent manner. In terms of tissue distribution, highly expressed in testis and spleen, moderate in kidney and liver and low in heart, brain, lung and skeletal muscle.

It localises to the cytoplasm. The protein localises to the nucleus. Mediates the nuclear export of proteins (cargos) with broad substrate specificity. In the nucleus binds cooperatively to its cargo and to the GTPase Ran in its active GTP-bound form. Docking of this trimeric complex to the nuclear pore complex (NPC) is mediated through binding to nucleoporins. Upon transit of a nuclear export complex into the cytoplasm, disassembling of the complex and hydrolysis of Ran-GTP to Ran-GDP (induced by RANBP1 and RANGAP1, respectively) cause release of the cargo from the export receptor. XPO7 then return to the nuclear compartment and mediate another round of transport. The directionality of nuclear export is thought to be conferred by an asymmetric distribution of the GTP- and GDP-bound forms of Ran between the cytoplasm and nucleus. This Mus musculus (Mouse) protein is Exportin-7 (Xpo7).